Consider the following 286-residue polypeptide: Bifunctional protein FolD (286 aa).

Residues 160–162 (GRS), Ser189, and Thr230 contribute to the NADP(+) site.

The protein belongs to the tetrahydrofolate dehydrogenase/cyclohydrolase family. As to quaternary structure, homodimer.

The catalysed reaction is (6R)-5,10-methylene-5,6,7,8-tetrahydrofolate + NADP(+) = (6R)-5,10-methenyltetrahydrofolate + NADPH. It carries out the reaction (6R)-5,10-methenyltetrahydrofolate + H2O = (6R)-10-formyltetrahydrofolate + H(+). It participates in one-carbon metabolism; tetrahydrofolate interconversion. Its function is as follows. Catalyzes the oxidation of 5,10-methylenetetrahydrofolate to 5,10-methenyltetrahydrofolate and then the hydrolysis of 5,10-methenyltetrahydrofolate to 10-formyltetrahydrofolate. The polypeptide is Bifunctional protein FolD (Chlamydia pneumoniae (Chlamydophila pneumoniae)).